The chain runs to 225 residues: UPF0173 metal-dependent hydrolase Fjoh_2786 (225 aa).

This sequence belongs to the UPF0173 family.

This chain is UPF0173 metal-dependent hydrolase Fjoh_2786, found in Flavobacterium johnsoniae (strain ATCC 17061 / DSM 2064 / JCM 8514 / BCRC 14874 / CCUG 350202 / NBRC 14942 / NCIMB 11054 / UW101) (Cytophaga johnsonae).